The primary structure comprises 349 residues: Protein FAM98C (349 aa).

The segment at Pro313 to Lys349 is disordered.

The protein belongs to the FAM98 family.

This Homo sapiens (Human) protein is Protein FAM98C (FAM98C).